We begin with the raw amino-acid sequence, 338 residues long: Ketol-acid reductoisomerase (NADP(+)) (338 aa).

The KARI N-terminal Rossmann domain maps to 1–181 (MKVFYDKDCD…GGGRAGIIET (181 aa)). NADP(+)-binding positions include 24-27 (YGSQ), Arg47, and Ser52. His107 is an active-site residue. Gly133 contacts NADP(+). One can recognise a KARI C-terminal knotted domain in the interval 182–327 (NFREETETDL…AKLRAMMPWI (146 aa)). The Mg(2+) site is built by Asp190, Glu194, Glu226, and Glu230. Ser251 contacts substrate.

Belongs to the ketol-acid reductoisomerase family. Requires Mg(2+) as cofactor.

The catalysed reaction is (2R)-2,3-dihydroxy-3-methylbutanoate + NADP(+) = (2S)-2-acetolactate + NADPH + H(+). The enzyme catalyses (2R,3R)-2,3-dihydroxy-3-methylpentanoate + NADP(+) = (S)-2-ethyl-2-hydroxy-3-oxobutanoate + NADPH + H(+). The protein operates within amino-acid biosynthesis; L-isoleucine biosynthesis; L-isoleucine from 2-oxobutanoate: step 2/4. It functions in the pathway amino-acid biosynthesis; L-valine biosynthesis; L-valine from pyruvate: step 2/4. In terms of biological role, involved in the biosynthesis of branched-chain amino acids (BCAA). Catalyzes an alkyl-migration followed by a ketol-acid reduction of (S)-2-acetolactate (S2AL) to yield (R)-2,3-dihydroxy-isovalerate. In the isomerase reaction, S2AL is rearranged via a Mg-dependent methyl migration to produce 3-hydroxy-3-methyl-2-ketobutyrate (HMKB). In the reductase reaction, this 2-ketoacid undergoes a metal-dependent reduction by NADPH to yield (R)-2,3-dihydroxy-isovalerate. In Herminiimonas arsenicoxydans, this protein is Ketol-acid reductoisomerase (NADP(+)).